Consider the following 349-residue polypeptide: D-arabinitol dehydrogenase 1 (349 aa).

Zn(2+) contacts are provided by Cys-46, His-67, Cys-97, Cys-100, Cys-103, Cys-111, and Glu-151.

The protein belongs to the zinc-containing alcohol dehydrogenase family. Zn(2+) serves as cofactor.

It is found in the cell projection. It carries out the reaction D-arabinitol + NADP(+) = D-xylulose + NADPH + H(+). It catalyses the reaction D-arabinitol + NADP(+) = D-ribulose + NADPH + H(+). Its function is as follows. D-arabinitol dehydrogenase which mostly produces D-arabinitol in haustoria, the appendages of the parasitic fungus that penetrate the host's tissue and draws nutrients from it. D-arabinitol accumulation may serve as a carbohydrate storage compound. D-arabinitol is also capable of quenching reactive oxygen species involved in host plant defense reactions, thus providing protection for the rust fungus during the pathogenic interaction. This chain is D-arabinitol dehydrogenase 1 (ARD1), found in Uromyces fabae (Rust fungus).